Here is a 229-residue protein sequence, read N- to C-terminus: Enolase-phosphatase E1 (229 aa).

Belongs to the HAD-like hydrolase superfamily. MasA/MtnC family. As to quaternary structure, monomer. Requires Mg(2+) as cofactor.

The enzyme catalyses 5-methylsulfanyl-2,3-dioxopentyl phosphate + H2O = 1,2-dihydroxy-5-(methylsulfanyl)pent-1-en-3-one + phosphate. Its pathway is amino-acid biosynthesis; L-methionine biosynthesis via salvage pathway; L-methionine from S-methyl-5-thio-alpha-D-ribose 1-phosphate: step 3/6. It functions in the pathway amino-acid biosynthesis; L-methionine biosynthesis via salvage pathway; L-methionine from S-methyl-5-thio-alpha-D-ribose 1-phosphate: step 4/6. Bifunctional enzyme that catalyzes the enolization of 2,3-diketo-5-methylthiopentyl-1-phosphate (DK-MTP-1-P) into the intermediate 2-hydroxy-3-keto-5-methylthiopentenyl-1-phosphate (HK-MTPenyl-1-P), which is then dephosphorylated to form the acireductone 1,2-dihydroxy-3-keto-5-methylthiopentene (DHK-MTPene). This chain is Enolase-phosphatase E1, found in Enterobacter sp. (strain 638).